A 444-amino-acid chain; its full sequence is 23S rRNA (uracil(1939)-C(5))-methyltransferase RlmD (444 aa).

Positions 5 to 64 (KPKLNLTSQTARIVNLSHDGRGIARVNGKATFIQGALPGEVVEFQYTRVKKDFDEGKLLS) constitute a TRAM domain. C77, C83, C86, and C166 together coordinate [4Fe-4S] cluster. S-adenosyl-L-methionine-binding residues include Q276, F305, N310, E326, N353, and D374. C400 (nucleophile) is an active-site residue.

This sequence belongs to the class I-like SAM-binding methyltransferase superfamily. RNA M5U methyltransferase family. RlmD subfamily.

It carries out the reaction uridine(1939) in 23S rRNA + S-adenosyl-L-methionine = 5-methyluridine(1939) in 23S rRNA + S-adenosyl-L-homocysteine + H(+). In terms of biological role, catalyzes the formation of 5-methyl-uridine at position 1939 (m5U1939) in 23S rRNA. The sequence is that of 23S rRNA (uracil(1939)-C(5))-methyltransferase RlmD from Legionella pneumophila (strain Paris).